The following is a 762-amino-acid chain: 5-methyltetrahydropteroyltriglutamate--homocysteine methyltransferase (762 aa).

Residues 17–20 (REWK) and K111 contribute to the 5-methyltetrahydropteroyltri-L-glutamate site. Residues 435–437 (IGS) and E488 contribute to the L-homocysteine site. L-methionine-binding positions include 435-437 (IGS) and E488. Residues 519–520 (RC) and W565 each bind 5-methyltetrahydropteroyltri-L-glutamate. L-homocysteine is bound at residue D603. D603 serves as a coordination point for L-methionine. Residue E609 coordinates 5-methyltetrahydropteroyltri-L-glutamate. Residues H645, C647, and E669 each coordinate Zn(2+). Residue H698 is the Proton donor of the active site. C730 serves as a coordination point for Zn(2+).

Belongs to the vitamin-B12 independent methionine synthase family. It depends on Zn(2+) as a cofactor.

The catalysed reaction is 5-methyltetrahydropteroyltri-L-glutamate + L-homocysteine = tetrahydropteroyltri-L-glutamate + L-methionine. It functions in the pathway amino-acid biosynthesis; L-methionine biosynthesis via de novo pathway; L-methionine from L-homocysteine (MetE route): step 1/1. Functionally, catalyzes the transfer of a methyl group from 5-methyltetrahydrofolate to homocysteine resulting in methionine formation. This chain is 5-methyltetrahydropteroyltriglutamate--homocysteine methyltransferase, found in Bacillus thuringiensis subsp. konkukian (strain 97-27).